A 235-amino-acid chain; its full sequence is Eukaryotic translation initiation factor 4E-1 (235 aa).

Residues Met1–Lys16 show a composition bias toward basic and acidic residues. The segment at Met1–Ser59 is disordered. 2 EIF4G-binding regions span residues His60–Glu63 and Phe70–Lys106. MRNA is bound by residues Lys78–Gly83, Lys110, and Trp128–Glu129. The cysteines at positions 133 and 171 are disulfide-linked. Positions Tyr154–Gln163 are EIF4G-binding. Residues Arg178 to Arg183 and Lys223 to Arg227 each bind mRNA.

The protein belongs to the eukaryotic initiation factor 4E family. EIF4F is a multi-subunit complex, the composition of which varies with external and internal environmental conditions. It is composed of at least EIF4A, EIF4E and EIF4G. EIF4E is also known to interact with other partners. In higher plants two isoforms of EIF4F have been identified, named isoform EIF4F and isoform EIF(iso)4F. Isoform EIF4F has subunits p220 and p26, whereas isoform EIF(iso)4F has subunits p82 and p28. Interacts directly with EXA1. As to quaternary structure, (Microbial infection) Interacts with viral genome-linked protein (VPg); this interaction is possible in susceptible hosts but impaired in resistant plants. Post-translationally, according to the redox status, the Cys-133-Cys-171 disulfide bridge may have a role in regulating protein function by affecting its ability to bind capped mRNA. Expressed in all tissues except in the cells of the specialization zone of the roots.

It is found in the nucleus. The protein localises to the cytoplasm. Functionally, component of the protein complex eIF4F, which is involved in the recognition of the mRNA cap, ATP-dependent unwinding of 5'-terminal secondary structure and recruitment of mRNA to the ribosome. Recognizes and binds the 7-methylguanosine-containing mRNA cap during an early step in the initiation of protein synthesis and facilitates ribosome binding by inducing the unwinding of the mRNAs secondary structures. Key component of recessive resistance to potyviruses. In terms of biological role, (Microbial infection) Susceptibility host factor required for viral infection by recruiting viral RNAs to the host ribosomal complex via an interaction with viral genome-linked protein (VPg). The chain is Eukaryotic translation initiation factor 4E-1 from Arabidopsis thaliana (Mouse-ear cress).